A 163-amino-acid chain; its full sequence is Nucleotide-binding protein RBAM_011030 (163 aa).

It belongs to the YajQ family.

Nucleotide-binding protein. This chain is Nucleotide-binding protein RBAM_011030, found in Bacillus velezensis (strain DSM 23117 / BGSC 10A6 / LMG 26770 / FZB42) (Bacillus amyloliquefaciens subsp. plantarum).